Here is a 511-residue protein sequence, read N- to C-terminus: Maturase K (511 aa).

This sequence belongs to the intron maturase 2 family. MatK subfamily.

It is found in the plastid. The protein resides in the chloroplast. Functionally, usually encoded in the trnK tRNA gene intron. Probably assists in splicing its own and other chloroplast group II introns. The protein is Maturase K of Adesmia lanata.